A 66-amino-acid chain; its full sequence is Large ribosomal subunit protein bL35 (66 aa).

Residues 1–15 (MPKMKTKSSAKKRFK) show a composition bias toward basic residues. The interval 1 to 32 (MPKMKTKSSAKKRFKMTATGKVRAGQAGKRHG) is disordered.

The protein belongs to the bacterial ribosomal protein bL35 family.

This chain is Large ribosomal subunit protein bL35, found in Dinoroseobacter shibae (strain DSM 16493 / NCIMB 14021 / DFL 12).